We begin with the raw amino-acid sequence, 130 residues long: uncharacterized protein (130 aa).

N-acetylmethionine is present on Met1.

As to quaternary structure, homotetramer.

This is an uncharacterized protein from Arabidopsis thaliana (Mouse-ear cress).